A 145-amino-acid chain; its full sequence is 3-dehydroquinate dehydratase (145 aa).

Tyr-24 acts as the Proton acceptor in catalysis. Positions 75, 81, and 88 each coordinate substrate. His-101 (proton donor) is an active-site residue. Residues Ile-102–Ser-103 and Arg-112 contribute to the substrate site.

This sequence belongs to the type-II 3-dehydroquinase family. As to quaternary structure, homododecamer.

The catalysed reaction is 3-dehydroquinate = 3-dehydroshikimate + H2O. Its pathway is metabolic intermediate biosynthesis; chorismate biosynthesis; chorismate from D-erythrose 4-phosphate and phosphoenolpyruvate: step 3/7. Functionally, catalyzes a trans-dehydration via an enolate intermediate. This Corynebacterium glutamicum (strain ATCC 13032 / DSM 20300 / JCM 1318 / BCRC 11384 / CCUG 27702 / LMG 3730 / NBRC 12168 / NCIMB 10025 / NRRL B-2784 / 534) protein is 3-dehydroquinate dehydratase (aroQ).